A 204-amino-acid polypeptide reads, in one-letter code: Holliday junction branch migration complex subunit RuvA (204 aa).

Positions 1–64 (MIAKLTGILD…ETDQRLIGFT (64 aa)) are domain I. A domain II region spans residues 65-143 (SAGERAWFRL…GLAGYASPVG (79 aa)). Positions 144–154 (PGGEAFVAPPG) are flexible linker. Residues 154 to 204 (GNASADAVSALQNLGFKPAVASSAVAAAVKELGEDAGLNDLVRVALKRAAG) are domain III.

Belongs to the RuvA family. In terms of assembly, homotetramer. Forms an RuvA(8)-RuvB(12)-Holliday junction (HJ) complex. HJ DNA is sandwiched between 2 RuvA tetramers; dsDNA enters through RuvA and exits via RuvB. An RuvB hexamer assembles on each DNA strand where it exits the tetramer. Each RuvB hexamer is contacted by two RuvA subunits (via domain III) on 2 adjacent RuvB subunits; this complex drives branch migration. In the full resolvosome a probable DNA-RuvA(4)-RuvB(12)-RuvC(2) complex forms which resolves the HJ.

It is found in the cytoplasm. The RuvA-RuvB-RuvC complex processes Holliday junction (HJ) DNA during genetic recombination and DNA repair, while the RuvA-RuvB complex plays an important role in the rescue of blocked DNA replication forks via replication fork reversal (RFR). RuvA specifically binds to HJ cruciform DNA, conferring on it an open structure. The RuvB hexamer acts as an ATP-dependent pump, pulling dsDNA into and through the RuvAB complex. HJ branch migration allows RuvC to scan DNA until it finds its consensus sequence, where it cleaves and resolves the cruciform DNA. The protein is Holliday junction branch migration complex subunit RuvA of Novosphingobium aromaticivorans (strain ATCC 700278 / DSM 12444 / CCUG 56034 / CIP 105152 / NBRC 16084 / F199).